Here is a 632-residue protein sequence, read N- to C-terminus: ATP-dependent RNA helicase mrh4, mitochondrial (632 aa).

The transit peptide at 1-37 (MNRLGRMSLPLRSPACLICQTRTTTLIPSSWQTARSM) directs the protein to the mitochondrion. Residues 49-111 (MALSPDVAKP…KEEAQKKESP (63 aa)) form a disordered region. A compositionally biased stretch (basic and acidic residues) spans 97 to 111 (RSGDSKEEAQKKESP). The short motif at 141-174 (TSFDQFPLLPVVRNSIVSQALPGLMEVTPTPIQR) is the Q motif element. The Helicase ATP-binding domain occupies 194–406 (DDDEPHYDQF…RKRYPDIKRL (213 aa)). 207–214 (AETGSGKT) serves as a coordination point for ATP. The short motif at 353-356 (DEAD) is the DEAD box element. Residues 460–632 (FLEPKTKKIL…EGMFRGQALI (173 aa)) form the Helicase C-terminal domain.

It belongs to the DEAD box helicase family. MRH4 subfamily.

The protein resides in the mitochondrion. The catalysed reaction is ATP + H2O = ADP + phosphate + H(+). Functionally, ATP-binding RNA helicase involved in mitochondrial RNA metabolism. Required for maintenance of mitochondrial DNA. The sequence is that of ATP-dependent RNA helicase mrh4, mitochondrial (mrh4) from Aspergillus clavatus (strain ATCC 1007 / CBS 513.65 / DSM 816 / NCTC 3887 / NRRL 1 / QM 1276 / 107).